The primary structure comprises 328 residues: MSVATSDMSGAGPEQAKAVLIAGPTASGKSALALRLAEARGGVVINTDSMQVYRDLRVLTARPTPDEEARAPHRLYGTVDAAQNFSAGAWLDAAAGALAEARRAGAMPIFIGGSGLYFKALTRGLSAVPPIAPEVREAVRERLARDGVAALHAELARCDSEAAARLNVADRSRVARALEVIIATGKPQAAWHAEALPPLLPPSEVLAAVFLAPQREALYARIDARFATMLAEGALDEVAALRARQLDPLLPAMKAHGVPALIRHLDGALSLDEAAAIGCADTRHYAKRQFTWFRHQLPEFCWVAPEEAGNYLGDVIPGRERSERARNP.

Residue 23–30 coordinates ATP; that stretch reads GPTASGKS. 25-30 contributes to the substrate binding site; it reads TASGKS. The interaction with substrate tRNA stretch occupies residues 48–51; that stretch reads DSMQ.

This sequence belongs to the IPP transferase family. In terms of assembly, monomer. It depends on Mg(2+) as a cofactor.

The catalysed reaction is adenosine(37) in tRNA + dimethylallyl diphosphate = N(6)-dimethylallyladenosine(37) in tRNA + diphosphate. Functionally, catalyzes the transfer of a dimethylallyl group onto the adenine at position 37 in tRNAs that read codons beginning with uridine, leading to the formation of N6-(dimethylallyl)adenosine (i(6)A). In Rhodopseudomonas palustris (strain BisA53), this protein is tRNA dimethylallyltransferase.